Reading from the N-terminus, the 191-residue chain is Uridylate kinase (191 aa).

G12–T17 serves as a coordination point for ATP. The segment at S33 to V63 is NMP. A ribonucleoside 5'-phosphate-binding positions include R39, K61–V63, G91–R94, and Q98. The tract at residues H128–D138 is LID. R129 serves as a coordination point for ATP. A ribonucleoside 5'-phosphate is bound by residues R135 and R146. Q174 provides a ligand contact to ATP.

Belongs to the adenylate kinase family. UMP-CMP kinase subfamily. Monomer. Mg(2+) is required as a cofactor.

The protein localises to the cytoplasm. It is found in the nucleus. The catalysed reaction is UMP + ATP = UDP + ADP. Its function is as follows. Catalyzes the phosphorylation of pyrimidine nucleoside monophosphates at the expense of ATP. Plays an important role in de novo pyrimidine nucleotide biosynthesis. Has preference for UMP and dUMP as phosphate acceptors, but can also use CMP, dCMP and AMP. The sequence is that of Uridylate kinase from Schizosaccharomyces pombe (strain 972 / ATCC 24843) (Fission yeast).